The primary structure comprises 607 residues: Threonine--tRNA ligase (607 aa).

A catalytic region spans residues 200-502 (DHRKLGRELG…LIEEYAGDFP (303 aa)). Zn(2+)-binding residues include Cys299, His350, and His479.

This sequence belongs to the class-II aminoacyl-tRNA synthetase family. Homodimer. Zn(2+) serves as cofactor.

It localises to the cytoplasm. The catalysed reaction is tRNA(Thr) + L-threonine + ATP = L-threonyl-tRNA(Thr) + AMP + diphosphate + H(+). Catalyzes the attachment of threonine to tRNA(Thr) in a two-step reaction: L-threonine is first activated by ATP to form Thr-AMP and then transferred to the acceptor end of tRNA(Thr). Also edits incorrectly charged L-seryl-tRNA(Thr). The sequence is that of Threonine--tRNA ligase from Synechococcus sp. (strain ATCC 27144 / PCC 6301 / SAUG 1402/1) (Anacystis nidulans).